A 394-amino-acid polypeptide reads, in one-letter code: V-type proton ATPase subunit C (394 aa).

Ser17 is subject to Phosphoserine.

The protein belongs to the V-ATPase C subunit family. In terms of assembly, V-ATPase is a heteromultimeric enzyme composed of a peripheral catalytic V1 complex (components A to H) attached to an integral membrane V0 proton pore complex (components: a, c, c', c'', d, e, f and VOA1).

The protein localises to the cytoplasm. It is found in the vacuole membrane. Functionally, subunit of the V1 complex of vacuolar(H+)-ATPase (V-ATPase), a multisubunit enzyme composed of a peripheral complex (V1) that hydrolyzes ATP and a membrane integral complex (V0) that translocates protons. V-ATPase is responsible for acidifying and maintaining the pH of intracellular compartments. Subunit C is necessary for the assembly of the catalytic sector of the enzyme and is likely to have a specific function in its catalytic activity. Reversibly leaves the enzyme after glucose depletion, causing the catalytic subcomplex V1 to detach from the V0 section. The protein is V-type proton ATPase subunit C of Schizosaccharomyces pombe (strain 972 / ATCC 24843) (Fission yeast).